We begin with the raw amino-acid sequence, 166 residues long: UPF0304 protein VIBHAR_01542 (166 aa).

The protein belongs to the UPF0304 family.

This Vibrio campbellii (strain ATCC BAA-1116) protein is UPF0304 protein VIBHAR_01542.